A 773-amino-acid chain; its full sequence is Endonuclease MutS2 (773 aa).

334–341 (GANAGGKT) is an ATP binding site. The 76-residue stretch at 698–773 (VDLRGMRADV…GDGMTMVTLK (76 aa)) folds into the Smr domain.

This sequence belongs to the DNA mismatch repair MutS family. MutS2 subfamily. As to quaternary structure, homodimer. Binds to stalled ribosomes, contacting rRNA.

Endonuclease that is involved in the suppression of homologous recombination and thus may have a key role in the control of bacterial genetic diversity. Functionally, acts as a ribosome collision sensor, splitting the ribosome into its 2 subunits. Detects stalled/collided 70S ribosomes which it binds and splits by an ATP-hydrolysis driven conformational change. Acts upstream of the ribosome quality control system (RQC), a ribosome-associated complex that mediates the extraction of incompletely synthesized nascent chains from stalled ribosomes and their subsequent degradation. Probably generates substrates for RQC. The sequence is that of Endonuclease MutS2 from Solidesulfovibrio magneticus (strain ATCC 700980 / DSM 13731 / RS-1) (Desulfovibrio magneticus).